A 212-amino-acid chain; its full sequence is Uridine kinase (212 aa).

13 to 20 (GASASGKS) contacts ATP.

The protein belongs to the uridine kinase family.

Its subcellular location is the cytoplasm. It carries out the reaction uridine + ATP = UMP + ADP + H(+). The catalysed reaction is cytidine + ATP = CMP + ADP + H(+). Its pathway is pyrimidine metabolism; CTP biosynthesis via salvage pathway; CTP from cytidine: step 1/3. The protein operates within pyrimidine metabolism; UMP biosynthesis via salvage pathway; UMP from uridine: step 1/1. In Shewanella denitrificans (strain OS217 / ATCC BAA-1090 / DSM 15013), this protein is Uridine kinase.